Reading from the N-terminus, the 178-residue chain is Crossover junction endodeoxyribonuclease RuvC (178 aa).

Residues Asp-18, Glu-78, and Asp-150 contribute to the active site. Asp-18, Glu-78, and Asp-150 together coordinate Mg(2+).

It belongs to the RuvC family. As to quaternary structure, homodimer which binds Holliday junction (HJ) DNA. The HJ becomes 2-fold symmetrical on binding to RuvC with unstacked arms; it has a different conformation from HJ DNA in complex with RuvA. In the full resolvosome a probable DNA-RuvA(4)-RuvB(12)-RuvC(2) complex forms which resolves the HJ. Mg(2+) is required as a cofactor.

It localises to the cytoplasm. The catalysed reaction is Endonucleolytic cleavage at a junction such as a reciprocal single-stranded crossover between two homologous DNA duplexes (Holliday junction).. Its function is as follows. The RuvA-RuvB-RuvC complex processes Holliday junction (HJ) DNA during genetic recombination and DNA repair. Endonuclease that resolves HJ intermediates. Cleaves cruciform DNA by making single-stranded nicks across the HJ at symmetrical positions within the homologous arms, yielding a 5'-phosphate and a 3'-hydroxyl group; requires a central core of homology in the junction. The consensus cleavage sequence is 5'-(A/T)TT(C/G)-3'. Cleavage occurs on the 3'-side of the TT dinucleotide at the point of strand exchange. HJ branch migration catalyzed by RuvA-RuvB allows RuvC to scan DNA until it finds its consensus sequence, where it cleaves and resolves the cruciform DNA. The protein is Crossover junction endodeoxyribonuclease RuvC of Granulibacter bethesdensis (strain ATCC BAA-1260 / CGDNIH1).